A 146-amino-acid chain; its full sequence is Protein MGF 100-3L (146 aa).

The protein belongs to the asfivirus MGF 100 family.

Functionally, plays a role in virus cell tropism, and may be required for efficient virus replication in macrophages. This chain is Protein MGF 100-3L, found in Ornithodoros (relapsing fever ticks).